The sequence spans 184 residues: Troponin I, slow skeletal muscle (184 aa).

Pro1 bears the N-acetylproline; partial mark. The tract at residues 1-45 (PEVERKSKITASRKLLKSLMLAKAKECQQEHEAREAEKVRYLAER) is involved in binding TNC. Ser55 bears the Phosphoserine mark. Residues 94-115 (LKLKVLDLRGKFKRPPLRRVRV) form an involved in binding TNC and actin region.

The protein belongs to the troponin I family. Binds to actin and tropomyosin. Post-translationally, in the muscle sample, approximately 25% of the chains were blocked. Pro-1 is probably acetylated. In terms of processing, the N-terminus is blocked.

In terms of biological role, troponin I is the inhibitory subunit of troponin, the thin filament regulatory complex which confers calcium-sensitivity to striated muscle actomyosin ATPase activity. The chain is Troponin I, slow skeletal muscle (TNNI1) from Oryctolagus cuniculus (Rabbit).